The sequence spans 453 residues: MSYQQPQLRGPLQRETDPSDRESLVSGHEHGGKSSQSAAVFNVVNSVIGSGIIGLPYSMKQAGFPLGILLLFWVSYITDFSLVLLIKGGALSGTDSYQSLVNKTFGFPGYLLLSTLQFMYPFIAMISYNIITGDTLSKVFQRLPGVDPGSWFISRHFIIVVSTVTCTLPLSLYRDIAKLGKISFISTILTAVILGVVVTRTISLGPNIPKTDNAWVFARPNAIQAIGVMSFAFICHHNCFLVYGSLEEPTVAKWRRVIHTSILVSVFICVLFATCGYFTFTGFTQGDLFENYCRSDDLVTFGRFCYGITVILTYPIECFVTREVITNVFFGGALSSVFHVTLTAAIVTAATLISLLIDCLGIVLELNGVLCAAPLIFIIPSACYLKLSEEPRTHSDKLMACVMFPVGAVVMVAGFVMAITNPQDCTHGQEMFYCFPDNISLTNISHSPRQLTA.

Residues 1–34 (MSYQQPQLRGPLQRETDPSDRESLVSGHEHGGKS) form a disordered region. The span at 12–32 (LQRETDPSDRESLVSGHEHGG) shows a compositional bias: basic and acidic residues. The next 11 helical transmembrane spans lie at 39-59 (AVFN…PYSM), 66-86 (LGIL…VLLI), 106-126 (GFPG…IAMI), 152-172 (FISR…PLSL), 179-199 (LGKI…VVVT), 222-242 (AIQA…CFLV), 262-282 (ILVS…TFTG), 299-319 (VTFG…IECF), 337-357 (VFHV…SLLI), 359-379 (CLGI…IFII), and 399-419 (MACV…VMAI).

The protein belongs to the amino acid/polyamine transporter 2 family. In terms of tissue distribution, widely expressed.

The protein resides in the membrane. Its function is as follows. Putative sodium-dependent amino acid/proton antiporter. This Rattus norvegicus (Rat) protein is Putative sodium-coupled neutral amino acid transporter 11 (Slc38a11).